Consider the following 758-residue polypeptide: Amyloid beta precursor protein binding family B member 2 (758 aa).

Residue S123 is modified to Phosphoserine. Positions 134–154 (KLEGKEPHPQDSSSCEILPSQ) are disordered. S160 carries the post-translational modification Phosphoserine. A compositionally biased stretch (basic and acidic residues) spans 176–190 (EQNRGNHHGTAEEKS). 3 disordered regions span residues 176–195 (EQNR…PVQG), 206–295 (LLLQ…LPPG), and 326–351 (DLQG…KQPW). Composition is skewed to polar residues over residues 212–230 (NRPQ…SSSP) and 261–275 (SWTT…PSSP). One can recognise a WW domain in the interval 290–322 (PDLPPGWKRVSDIAGTYYWHIPTGTTQWERPVS). Over residues 331–340 (RKGSLSSVTP) the composition is skewed to polar residues. A phosphoserine mark is found at S334, S409, and S412. 2 PID domains span residues 413–578 (DPEA…LQVD) and 584–736 (TELV…VTTN).

As to quaternary structure, interacts (via C-terminus) with APP (via C-terminus). Interacts with APLP2 (via cytoplasmic domain). As to expression, widely expressed.

The protein resides in the endoplasmic reticulum. It localises to the golgi apparatus. Its subcellular location is the early endosome. In terms of biological role, plays a role in the maintenance of lens transparency, and may also play a role in muscle cell strength. Involved in hippocampal neurite branching and neuromuscular junction formation, as a result plays a role in spatial memory functioning. Activates transcription of APP. In Homo sapiens (Human), this protein is Amyloid beta precursor protein binding family B member 2.